The sequence spans 400 residues: MIIKPRVRGFICVTTHPVGCEANVKEQIDYVTSHGPIANGPKKVLVIGASTGYGLAARISAAFGAGADTLGVFFERPGSETKPGTAGWYNSAAFERFATEKGLYARSINGDAFSDQVKQVTIDTIKQDLGKVDLVVYSLAAPRRTHPKTGETISSTLKPIGKTVTFRGIDTDKEVIRETVLEPATQEEIDGTVAVMGGEDWQMWIDALDEAGVLADGAKTTAFTYLGEQITHDIYWNGSIGEAKKDLDKKVLSIRDKLAAHGGDARVSVLKAVVTQASSAIPMMPLYLSLLFKVMKEAGTHEGCIEQVYGLFKDSLYGATPHLDDEGRLRADYKELDPQIQKKVVELWDQVTNENLYELTDFAGYKTDFLRLFGFEIAGVDYDADVNPDVKIPRIIDTTV.

NAD(+)-binding positions include 48-53, 74-75, 111-112, and 139-140; these read GASTGY, FE, DA, and LA. A substrate-binding site is contributed by Tyr225. Tyr235 (proton donor) is an active-site residue. NAD(+) is bound by residues Lys244 and 273-275; that span reads VVT.

The protein belongs to the TER reductase family. As to quaternary structure, monomer.

The catalysed reaction is a 2,3-saturated acyl-[ACP] + NAD(+) = a (2E)-enoyl-[ACP] + NADH + H(+). It participates in lipid metabolism; fatty acid biosynthesis. Involved in the final reduction of the elongation cycle of fatty acid synthesis (FAS II). Catalyzes the reduction of a carbon-carbon double bond in an enoyl moiety that is covalently linked to an acyl carrier protein (ACP). The chain is Enoyl-[acyl-carrier-protein] reductase [NADH] from Burkholderia multivorans (strain ATCC 17616 / 249).